Here is a 326-residue protein sequence, read N- to C-terminus: 4-hydroxythreonine-4-phosphate dehydrogenase (326 aa).

Threonine 132 contributes to the substrate binding site. The a divalent metal cation site is built by histidine 160, histidine 205, and histidine 260. Substrate is bound by residues lysine 268, asparagine 277, and arginine 286.

This sequence belongs to the PdxA family. Homodimer. Zn(2+) is required as a cofactor. The cofactor is Mg(2+). It depends on Co(2+) as a cofactor.

It localises to the cytoplasm. The enzyme catalyses 4-(phosphooxy)-L-threonine + NAD(+) = 3-amino-2-oxopropyl phosphate + CO2 + NADH. Its pathway is cofactor biosynthesis; pyridoxine 5'-phosphate biosynthesis; pyridoxine 5'-phosphate from D-erythrose 4-phosphate: step 4/5. Its function is as follows. Catalyzes the NAD(P)-dependent oxidation of 4-(phosphooxy)-L-threonine (HTP) into 2-amino-3-oxo-4-(phosphooxy)butyric acid which spontaneously decarboxylates to form 3-amino-2-oxopropyl phosphate (AHAP). This chain is 4-hydroxythreonine-4-phosphate dehydrogenase, found in Stenotrophomonas maltophilia (strain K279a).